The primary structure comprises 166 residues: Large ribosomal subunit protein uL10 (166 aa).

The protein belongs to the universal ribosomal protein uL10 family. As to quaternary structure, part of the ribosomal stalk of the 50S ribosomal subunit. The N-terminus interacts with L11 and the large rRNA to form the base of the stalk. The C-terminus forms an elongated spine to which L12 dimers bind in a sequential fashion forming a multimeric L10(L12)X complex.

In terms of biological role, forms part of the ribosomal stalk, playing a central role in the interaction of the ribosome with GTP-bound translation factors. In Shewanella woodyi (strain ATCC 51908 / MS32), this protein is Large ribosomal subunit protein uL10.